Consider the following 251-residue polypeptide: UPF0309 protein GK1441 (251 aa).

An SIS domain is found at 31–214 (VSEAIQNGGI…VLMAENGIEP (184 aa)).

Belongs to the UPF0309 family.

This Geobacillus kaustophilus (strain HTA426) protein is UPF0309 protein GK1441.